Reading from the N-terminus, the 280-residue chain is Fructose-1,6-bisphosphatase class 1 (280 aa).

Residues glutamate 64, aspartate 83, leucine 85, and aspartate 86 each contribute to the Mg(2+) site. Substrate-binding positions include aspartate 86–serine 89, tyrosine 189, and lysine 220. Glutamate 226 is a Mg(2+) binding site.

This sequence belongs to the FBPase class 1 family. Homotetramer. The cofactor is Mg(2+).

It is found in the cytoplasm. It carries out the reaction beta-D-fructose 1,6-bisphosphate + H2O = beta-D-fructose 6-phosphate + phosphate. It functions in the pathway carbohydrate biosynthesis; gluconeogenesis. This chain is Fructose-1,6-bisphosphatase class 1, found in Campylobacter jejuni (strain RM1221).